The sequence spans 1289 residues: Pesticidal crystal protein Cry5Ab (1289 aa).

Residues 1263–1289 (PLPTDDQNSEGNTASSTNSDTSMNNNQ) form a disordered region. Low complexity predominate over residues 1274–1289 (NTASSTNSDTSMNNNQ).

This sequence belongs to the delta endotoxin family.

Functionally, endotoxin with nematicidal activity. The polypeptide is Pesticidal crystal protein Cry5Ab (cry5Ab) (Bacillus thuringiensis subsp. darmstadiensis).